Consider the following 190-residue polypeptide: Jupiter microtubule associated homolog 2 (190 aa).

Methionine 1 is modified (N-acetylmethionine). The segment covering 1-15 (MFQGADSQAGKSGSR) has biased composition (polar residues). Positions 1–190 (MFQGADSQAG…PGGKSSLSFY (190 aa)) are disordered. Residue lysine 11 is modified to N6-acetyllysine. A Phosphoserine modification is found at serine 30. A compositionally biased stretch (polar residues) spans 35–44 (ISSSKPNRMA). Phosphoserine is present on residues serine 45, serine 69, and serine 97. Basic and acidic residues-rich tracts occupy residues 110 to 129 (KPKD…DLKA) and 138 to 153 (EQSD…HAKI). At serine 144 the chain carries Phosphoserine.

The protein belongs to the JUPITER family. In terms of assembly, monomer. Dimer. Interacts with TPCN1.

The protein resides in the cytoplasm. Its subcellular location is the nucleus. Functionally, nicotinic acid adenine dinucleotide phosphate (NAADP) binding protein required for NAADP-evoked intracellular calcium release. Confers NAADP-sensitivity to the two pore channels (TPCs) complex. Enables NAADP to activate Ca(2+) release from the endoplasmic reticulum through ryanodine receptors. The polypeptide is Jupiter microtubule associated homolog 2 (Mus musculus (Mouse)).